Consider the following 748-residue polypeptide: DNA helicase/primase complex-associated protein (748 aa).

It belongs to the herpesviridae HEPA family. Associates with the primase and the helicase to form the helicase-primase complex. Interacts with the origin-binding protein. Interacts with the polymerase catalytic subunit.

It localises to the host nucleus. Its function is as follows. Component of the helicase/primase complex. Unwinds the DNA at the replication forks and generates single-stranded DNA for both leading and lagging strand synthesis. The primase synthesizes short RNA primers on the lagging strand that the polymerase presumably elongates using dNTPs. The primase-associated factor has no known catalytic activity in the complex and may serve to facilitate the formation of the replisome by directly interacting with the origin-binding protein and the polymerase. In Bos taurus (Bovine), this protein is DNA helicase/primase complex-associated protein (UL8).